A 161-amino-acid chain; its full sequence is Putative 4-hydroxy-4-methyl-2-oxoglutarate aldolase (161 aa).

Substrate-binding positions include 75-78 (GDNL) and Arg97. Asp98 contributes to the a divalent metal cation binding site.

The protein belongs to the class II aldolase/RraA-like family. In terms of assembly, homotrimer. A divalent metal cation is required as a cofactor.

It catalyses the reaction 4-hydroxy-4-methyl-2-oxoglutarate = 2 pyruvate. The enzyme catalyses oxaloacetate + H(+) = pyruvate + CO2. Functionally, catalyzes the aldol cleavage of 4-hydroxy-4-methyl-2-oxoglutarate (HMG) into 2 molecules of pyruvate. Also contains a secondary oxaloacetate (OAA) decarboxylase activity due to the common pyruvate enolate transition state formed following C-C bond cleavage in the retro-aldol and decarboxylation reactions. The polypeptide is Putative 4-hydroxy-4-methyl-2-oxoglutarate aldolase (Alkalilimnicola ehrlichii (strain ATCC BAA-1101 / DSM 17681 / MLHE-1)).